The sequence spans 50 residues: MGLWISFGTPPSYTYLLIMNHKLLLINNNNLTEVHTYFNININIDKMYIH.

The protein resides in the mitochondrion. This is an uncharacterized protein from Saccharomyces cerevisiae (strain ATCC 204508 / S288c) (Baker's yeast).